Here is a 477-residue protein sequence, read N- to C-terminus: Argininosuccinate lyase (477 aa).

The protein belongs to the lyase 1 family. Argininosuccinate lyase subfamily.

Its subcellular location is the cytoplasm. The catalysed reaction is 2-(N(omega)-L-arginino)succinate = fumarate + L-arginine. It participates in amino-acid biosynthesis; L-arginine biosynthesis; L-arginine from L-ornithine and carbamoyl phosphate: step 3/3. This is Argininosuccinate lyase from Acinetobacter baumannii (strain AB307-0294).